The chain runs to 143 residues: 3-dehydroquinate dehydratase (143 aa).

Y23 functions as the Proton acceptor in the catalytic mechanism. Substrate contacts are provided by N74, H80, and D87. The Proton donor role is filled by H100. Substrate-binding positions include 101–102 (IS) and R111.

This sequence belongs to the type-II 3-dehydroquinase family. Homododecamer.

It carries out the reaction 3-dehydroquinate = 3-dehydroshikimate + H2O. Its pathway is metabolic intermediate biosynthesis; chorismate biosynthesis; chorismate from D-erythrose 4-phosphate and phosphoenolpyruvate: step 3/7. Functionally, catalyzes a trans-dehydration via an enolate intermediate. The protein is 3-dehydroquinate dehydratase of Endomicrobium trichonymphae.